Reading from the N-terminus, the 513-residue chain is Light-independent protochlorophyllide reductase subunit B (513 aa).

Residue Asp36 participates in [4Fe-4S] cluster binding. The active-site Proton donor is Asp299. 434 to 435 serves as a coordination point for substrate; sequence GM.

Belongs to the ChlB/BchB/BchZ family. In terms of assembly, protochlorophyllide reductase is composed of three subunits; ChlL, ChlN and ChlB. Forms a heterotetramer of two ChlB and two ChlN subunits. The cofactor is [4Fe-4S] cluster.

The protein localises to the plastid. The protein resides in the chloroplast. The catalysed reaction is chlorophyllide a + oxidized 2[4Fe-4S]-[ferredoxin] + 2 ADP + 2 phosphate = protochlorophyllide a + reduced 2[4Fe-4S]-[ferredoxin] + 2 ATP + 2 H2O. It functions in the pathway porphyrin-containing compound metabolism; chlorophyll biosynthesis (light-independent). Component of the dark-operative protochlorophyllide reductase (DPOR) that uses Mg-ATP and reduced ferredoxin to reduce ring D of protochlorophyllide (Pchlide) to form chlorophyllide a (Chlide). This reaction is light-independent. The NB-protein (ChlN-ChlB) is the catalytic component of the complex. This is Light-independent protochlorophyllide reductase subunit B from Marchantia polymorpha (Common liverwort).